The chain runs to 378 residues: Probable mannosyltransferase MNT3 (378 aa).

The Cytoplasmic portion of the chain corresponds to 1-4 (MLWH). A helical; Signal-anchor for type II membrane protein membrane pass occupies residues 5 to 25 (LVFILIAILLLTFSPKIESLF). Residues 26 to 378 (KSFTINKPTK…TNHFLNILHN (353 aa)) lie on the Lumenal side of the membrane. Residues Asn-73 and Asn-149 are each glycosylated (N-linked (GlcNAc...) asparagine).

Belongs to the glycosyltransferase 15 family.

The protein localises to the membrane. Transfers an alpha-D-mannosyl residue from GDP-mannose into lipid-linked oligosaccharide, forming an alpha-(1-&gt;2)-D-mannosyl-D-mannose linkage. This is Probable mannosyltransferase MNT3 (MNT3) from Candida albicans (strain SC5314 / ATCC MYA-2876) (Yeast).